The chain runs to 127 residues: Small ribosomal subunit protein uS8m (127 aa).

It belongs to the universal ribosomal protein uS8 family.

The protein localises to the mitochondrion. This is Small ribosomal subunit protein uS8m (RPS8) from Acanthamoeba castellanii (Amoeba).